We begin with the raw amino-acid sequence, 665 residues long: Beta-galactosidase LacZ (665 aa).

Arg-110 provides a ligand contact to substrate. Cys-114 contributes to the Zn(2+) binding site. Asn-148 lines the substrate pocket. Glu-149 acts as the Proton donor in catalysis. Cys-157, Cys-159, and Cys-162 together coordinate Zn(2+). The Nucleophile role is filled by Glu-303. Substrate-binding positions include Trp-311 and 351-354 (EKFH).

Belongs to the glycosyl hydrolase 42 family.

The enzyme catalyses Hydrolysis of terminal non-reducing beta-D-galactose residues in beta-D-galactosides.. In Heyndrickxia coagulans (Weizmannia coagulans), this protein is Beta-galactosidase LacZ.